A 256-amino-acid polypeptide reads, in one-letter code: 5'-nucleotidase SurE (256 aa).

A divalent metal cation contacts are provided by Asp-9, Asp-10, Ser-42, and Asn-95.

It belongs to the SurE nucleotidase family. Requires a divalent metal cation as cofactor.

Its subcellular location is the cytoplasm. The catalysed reaction is a ribonucleoside 5'-phosphate + H2O = a ribonucleoside + phosphate. In terms of biological role, nucleotidase that shows phosphatase activity on nucleoside 5'-monophosphates. In Campylobacter curvus (strain 525.92), this protein is 5'-nucleotidase SurE.